The chain runs to 478 residues: MSLIDVLIVDDEEDIRNIIAAILKDEGFNPKVAANSTQALKILAEKPVSAVILDIWLQGSEMDGLGILEVIKKRYPLMPVIIISGHGTIETAVNAIKMGAYDYIEKPFNNDKLVILLKRACEVTKLKRENIDLKSKVIDKTELVGNSTITLKYKAEIDKAASSSSRIMIHGKVGSGKELTARLIHKKSKRVNNLFIIFSPTCMTLEKINQELFGEAEKQESNNNSNKRPTILEFANNGTLYIDEVSNIPVPIQIKLLKFLKDHTIKKPCGKIVKVDIKIITGTSKNIQEEVNNGRFLEDLYYRLNVSSLKVPSLFERKEDIPLLVKYFVKQLSKFSGLKERVFADETIAALQSYEWPGNIRQLRNVVEWTLIMNPITSGNNEIIKPYMIPSEILANSVNLTKLEDSFDMLSMPLREAREVFERQYLSAQMSRFNNNILKTSSFVGMERSALHRKLKLLSLHIPPTGRINEEEYEEANA.

The Response regulatory domain occupies 5 to 121; the sequence is DVLIVDDEED…KLVILLKRAC (117 aa). 4-aspartylphosphate is present on D54. A Sigma-54 factor interaction domain is found at 143–372; that stretch reads LVGNSTITLK…LRNVVEWTLI (230 aa). ATP contacts are provided by residues 171-178 and 235-244; these read GKVGSGKE and ANNGTLYIDE.

Functionally, member of the two-component regulatory system RBE_0312/RBE_0470. The protein is Putative response regulator NtrX-like of Rickettsia bellii (strain RML369-C).